The sequence spans 111 residues: UPF0060 membrane protein XCC2880 (111 aa).

Transmembrane regions (helical) follow at residues 8 to 28 (LLLF…PYLW), 34 to 54 (SVWL…LLTL), 62 to 82 (VYAA…WWVD), and 91 to 111 (LLGA…PRSG).

It belongs to the UPF0060 family.

It is found in the cell inner membrane. The sequence is that of UPF0060 membrane protein XCC2880 from Xanthomonas campestris pv. campestris (strain ATCC 33913 / DSM 3586 / NCPPB 528 / LMG 568 / P 25).